A 130-amino-acid polypeptide reads, in one-letter code: Glycine cleavage system H protein (130 aa).

The Lipoyl-binding domain maps to 22 to 103; sequence KAYIGISDCA…PYGSWIAAIE (82 aa). Lys63 bears the N6-lipoyllysine mark.

This sequence belongs to the GcvH family. The glycine cleavage system is composed of four proteins: P, T, L and H. Requires (R)-lipoate as cofactor.

Functionally, the glycine cleavage system catalyzes the degradation of glycine. The H protein shuttles the methylamine group of glycine from the P protein to the T protein. The sequence is that of Glycine cleavage system H protein from Clostridium botulinum (strain Okra / Type B1).